A 204-amino-acid polypeptide reads, in one-letter code: Proteasome subunit beta type-3-B (204 aa).

Belongs to the peptidase T1B family. In terms of assembly, component of the 20S core complex of the 26S proteasome. The 26S proteasome is composed of a core protease (CP), known as the 20S proteasome, capped at one or both ends by the 19S regulatory particle (RP/PA700). The 20S proteasome core is composed of 28 subunits that are arranged in four stacked rings, resulting in a barrel-shaped structure. The two end rings are each formed by seven alpha subunits, and the two central rings are each formed by seven beta subunits. The catalytic chamber with the active sites is on the inside of the barrel.

It localises to the cytoplasm. Its subcellular location is the nucleus. In terms of biological role, non-catalytic component of the proteasome, a multicatalytic proteinase complex which is characterized by its ability to cleave peptides with Arg, Phe, Tyr, Leu, and Glu adjacent to the leaving group at neutral or slightly basic pH. The proteasome has an ATP-dependent proteolytic activity. This chain is Proteasome subunit beta type-3-B (PBC2), found in Arabidopsis thaliana (Mouse-ear cress).